We begin with the raw amino-acid sequence, 76 residues long: uncharacterized protein (76 aa).

This is an uncharacterized protein from Enterobacteria phage T4 (Bacteriophage T4).